The chain runs to 504 residues: Cobyric acid synthase (504 aa).

Residues 254-442 form the GATase cobBQ-type domain; the sequence is AIDVAVIRYP…MHDLFHNDMF (189 aa). The active-site Nucleophile is the C336. The active site involves H434.

It belongs to the CobB/CobQ family. CobQ subfamily.

It participates in cofactor biosynthesis; adenosylcobalamin biosynthesis. Its function is as follows. Catalyzes amidations at positions B, D, E, and G on adenosylcobyrinic A,C-diamide. NH(2) groups are provided by glutamine, and one molecule of ATP is hydrogenolyzed for each amidation. This Anoxybacillus flavithermus (strain DSM 21510 / WK1) protein is Cobyric acid synthase.